Here is a 110-residue protein sequence, read N- to C-terminus: Cytochrome c oxidase subunit 4B (110 aa).

A run of 3 helical transmembrane segments spans residues 29–49, 55–75, and 89–109; these read MIAFVLMILLTLIAFAAVGYE, FVVPFILLLAAVQVAFQLYYF, and FIYGGVAVMLLLVWAFTTVVW.

Belongs to the cytochrome c oxidase bacterial subunit 4 family.

It localises to the cell membrane. It catalyses the reaction 4 Fe(II)-[cytochrome c] + O2 + 8 H(+)(in) = 4 Fe(III)-[cytochrome c] + 2 H2O + 4 H(+)(out). The sequence is that of Cytochrome c oxidase subunit 4B (caaD) from Bacillus sp. (strain PS3).